The primary structure comprises 376 residues: MSASIPETMKAVVIENGKAVVKQDIPIPELEEGFVLIKTVAVAGNPTDWKHIDFKIGPQGALLGCDAAGQIVKLGPNVDAARFAIGDYIYGVIHGASVRFPSNGAFAEYSAISSETAYKPAREFRLCGKDKLPEGPVKSLEGAVSLPVSLTTAGMILTHSFGLDMTWKPSKAQRDQPILFWGGATAVGQMLIQLAKKLNGFSKIIVVASRKHEKLLKEYGADELFDYHDADVIEQIKKKYNNIPYLVDCVSNTETIQQVYKCAADDLDATVVQLTVLTEKDIKEEDRRQNVSIEGTLLYLIGGNDVPFGTFTLPADPEYKEAAIKFIKFINPKINDGEIHHIPVKVYKNGLDDIPQLLDDIKHGRNSGEKLVAVLK.

Belongs to the YCR102c/YLR460c/YNL134c family.

This is an uncharacterized protein from Saccharomyces cerevisiae (strain ATCC 204508 / S288c) (Baker's yeast).